Here is a 67-residue protein sequence, read N- to C-terminus: DNA-directed RNA polymerase subunit omega (67 aa).

It belongs to the RNA polymerase subunit omega family. As to quaternary structure, the RNAP catalytic core consists of 2 alpha, 1 beta, 1 beta' and 1 omega subunit. When a sigma factor is associated with the core the holoenzyme is formed, which can initiate transcription.

The enzyme catalyses RNA(n) + a ribonucleoside 5'-triphosphate = RNA(n+1) + diphosphate. In terms of biological role, promotes RNA polymerase assembly. Latches the N- and C-terminal regions of the beta' subunit thereby facilitating its interaction with the beta and alpha subunits. The sequence is that of DNA-directed RNA polymerase subunit omega from Polaromonas naphthalenivorans (strain CJ2).